Reading from the N-terminus, the 360-residue chain is Phenylalanine--tRNA ligase alpha subunit (360 aa).

E260 is a Mg(2+) binding site.

This sequence belongs to the class-II aminoacyl-tRNA synthetase family. Phe-tRNA synthetase alpha subunit type 1 subfamily. In terms of assembly, tetramer of two alpha and two beta subunits. Mg(2+) is required as a cofactor.

It is found in the cytoplasm. The enzyme catalyses tRNA(Phe) + L-phenylalanine + ATP = L-phenylalanyl-tRNA(Phe) + AMP + diphosphate + H(+). The polypeptide is Phenylalanine--tRNA ligase alpha subunit (Rhizobium etli (strain ATCC 51251 / DSM 11541 / JCM 21823 / NBRC 15573 / CFN 42)).